Reading from the N-terminus, the 499-residue chain is Sensor histidine kinase PdtaS (499 aa).

The interval 4-149 (LGDLLAEHTM…PLEGAYLDCA (146 aa)) is GAF. Residues 178-289 (DGFIRLNEGG…TEVKRRDRAL (112 aa)) form a PAS-like region. The Histidine kinase domain occupies 298-493 (EIHHRVKNNL…DVVLRVPIGR (196 aa)). Residue His-301 is modified to Phosphohistidine; by autocatalysis.

Autophosphorylated.

The protein resides in the cytoplasm. It carries out the reaction ATP + protein L-histidine = ADP + protein N-phospho-L-histidine.. Its function is as follows. Member of the two-component regulatory system PdtaR/PdtaS. This two-component system plays an essential role in mycobacterial adaptation to poor nutrient conditions. Nutrient deprivation results in increasing intracellular concentrations of cyclic diguanosine monophosphate (c-di-GMP), which binds to the PdtaS sensor and promotes its autophosphorylation, leading to the activation of the signaling cascade. The phosphate group is then transferred to PdtaR. This is Sensor histidine kinase PdtaS from Mycolicibacterium smegmatis (strain ATCC 700084 / mc(2)155) (Mycobacterium smegmatis).